Reading from the N-terminus, the 173-residue chain is Lipoprotein signal peptidase (173 aa).

4 helical membrane-spanning segments follow: residues 24–44, 55–75, 80–100, and 105–125; these read PWLG…IAIL, ITGF…SFLA, WQRW…VWLL, and GQKL…GNVI. Residues D135 and D153 contribute to the active site. Residues 145-165 traverse the membrane as a helical segment; the sequence is HWPAFNVADCGICIGAVLLII.

Belongs to the peptidase A8 family.

The protein resides in the cell inner membrane. It carries out the reaction Release of signal peptides from bacterial membrane prolipoproteins. Hydrolyzes -Xaa-Yaa-Zaa-|-(S,diacylglyceryl)Cys-, in which Xaa is hydrophobic (preferably Leu), and Yaa (Ala or Ser) and Zaa (Gly or Ala) have small, neutral side chains.. Its pathway is protein modification; lipoprotein biosynthesis (signal peptide cleavage). In terms of biological role, this protein specifically catalyzes the removal of signal peptides from prolipoproteins. The polypeptide is Lipoprotein signal peptidase (Ralstonia nicotianae (strain ATCC BAA-1114 / GMI1000) (Ralstonia solanacearum)).